Consider the following 497-residue polypeptide: Putative aldehyde dehydrogenase AldA (497 aa).

213–219 (GKGSESG) serves as a coordination point for NAD(+). Active-site residues include Glu257 and Cys291.

This sequence belongs to the aldehyde dehydrogenase family.

It carries out the reaction an aldehyde + NAD(+) + H2O = a carboxylate + NADH + 2 H(+). This is Putative aldehyde dehydrogenase AldA (aldA) from Staphylococcus epidermidis (strain ATCC 35984 / DSM 28319 / BCRC 17069 / CCUG 31568 / BM 3577 / RP62A).